Consider the following 172-residue polypeptide: Shikimate kinase (172 aa).

11-16 (GAGKST) is a binding site for ATP. Position 15 (serine 15) interacts with Mg(2+). Positions 33, 57, and 79 each coordinate substrate. Position 117 (arginine 117) interacts with ATP. Arginine 136 is a binding site for substrate. Residue arginine 153 participates in ATP binding.

The protein belongs to the shikimate kinase family. As to quaternary structure, monomer. Mg(2+) serves as cofactor.

The protein resides in the cytoplasm. The enzyme catalyses shikimate + ATP = 3-phosphoshikimate + ADP + H(+). It participates in metabolic intermediate biosynthesis; chorismate biosynthesis; chorismate from D-erythrose 4-phosphate and phosphoenolpyruvate: step 5/7. In terms of biological role, catalyzes the specific phosphorylation of the 3-hydroxyl group of shikimic acid using ATP as a cosubstrate. In Pseudomonas aeruginosa (strain LESB58), this protein is Shikimate kinase.